The sequence spans 361 residues: Chorismate synthase (361 aa).

Residues arginine 48 and arginine 54 each coordinate NADP(+). FMN is bound by residues arginine 125–serine 127, asparagine 238–alanine 239, glycine 278, lysine 293–serine 297, and arginine 319.

It belongs to the chorismate synthase family. As to quaternary structure, homotetramer. The cofactor is FMNH2.

It catalyses the reaction 5-O-(1-carboxyvinyl)-3-phosphoshikimate = chorismate + phosphate. The protein operates within metabolic intermediate biosynthesis; chorismate biosynthesis; chorismate from D-erythrose 4-phosphate and phosphoenolpyruvate: step 7/7. In terms of biological role, catalyzes the anti-1,4-elimination of the C-3 phosphate and the C-6 proR hydrogen from 5-enolpyruvylshikimate-3-phosphate (EPSP) to yield chorismate, which is the branch point compound that serves as the starting substrate for the three terminal pathways of aromatic amino acid biosynthesis. This reaction introduces a second double bond into the aromatic ring system. The polypeptide is Chorismate synthase (Vibrio vulnificus (strain YJ016)).